The sequence spans 78 residues: U-scoloptoxin(04)-Er1a (78 aa).

A signal peptide spans 1-24 (MTRHLIFAAVLLVCLFVCWNAIGA). The propeptide occupies 25 to 28 (QDAR).

This sequence belongs to the scoloptoxin-04 family. Post-translationally, contains 2 disulfide bonds. Expressed by the venom gland.

It localises to the secreted. In Ethmostigmus rubripes (Giant centipede), this protein is U-scoloptoxin(04)-Er1a.